A 736-amino-acid chain; its full sequence is Nucleoporin nup60 (736 aa).

A disordered region spans residues 1-46 (MSSGPIRTLHKGKAARNRTPYDRIAASKDGNHSNGPQTPSKSIFQR). Positions 19 to 31 (TPYDRIAASKDGN) are enriched in basic and acidic residues. The segment covering 32–43 (HSNGPQTPSKSI) has biased composition (polar residues). Ser157, Ser159, Ser161, and Ser162 each carry phosphoserine. Disordered stretches follow at residues 178–210 (RAAA…NSAK), 295–321 (DTSF…KTPS), 338–519 (TPSI…PNET), 565–614 (AVTD…RSLF), and 647–701 (EQAE…FPKF). Composition is skewed to polar residues over residues 196 to 210 (RTSS…NSAK) and 295 to 314 (DTSF…TTAN). Residues 375-397 (QIRPSSEKSEPEKKEPSAFETLE) show a composition bias toward basic and acidic residues. The segment covering 456–473 (SATTDKPSPPVSSIFSFN) has biased composition (polar residues). Composition is skewed to low complexity over residues 474 to 505 (APSA…TSFS) and 573 to 587 (EVSS…TMIS). The span at 588-597 (QPNTGFSFGS) shows a compositional bias: polar residues. The span at 664–692 (EVEKPSAEGTNEHKQDATMTLEKTDKQGS) shows a compositional bias: basic and acidic residues.

As to quaternary structure, component of the nuclear pore complex (NPC). NPC constitutes the exclusive means of nucleocytoplasmic transport. NPCs allow the passive diffusion of ions and small molecules and the active, nuclear transport receptor-mediated bidirectional transport of macromolecules such as proteins, RNAs, ribonucleoparticles (RNPs), and ribosomal subunits across the nuclear envelope.

The protein localises to the nucleus. It is found in the nuclear pore complex. It localises to the nucleus membrane. Functions as a component of the nuclear pore complex (NPC). NPC components, collectively referred to as nucleoporins (NUPs), can play the role of both NPC structural components and of docking or interaction partners for transiently associated nuclear transport factors. Active directional transport is assured by both, a Phe-Gly (FG) repeat affinity gradient for these transport factors across the NPC and a transport cofactor concentration gradient across the nuclear envelope. In Schizosaccharomyces pombe (strain 972 / ATCC 24843) (Fission yeast), this protein is Nucleoporin nup60 (nup60).